The following is a 132-amino-acid chain: Agouti-signaling protein (132 aa).

The signal sequence occupies residues 1–22 (MDVTRLLLATLLVFLCFFTAYS). An N-linked (GlcNAc...) asparagine glycan is attached at Asn39. Positions 61–87 (QISRKEAEKKRSSKKEASMKKVARPRT) are disordered. Residues 63–79 (SRKEAEKKRSSKKEASM) are compositionally biased toward basic and acidic residues. Intrachain disulfides connect Cys93-Cys108, Cys100-Cys114, Cys107-Cys125, Cys111-Cys132, and Cys116-Cys123. In terms of domain architecture, Agouti spans 93 to 132 (CVTTRDSCKPPAPACCDPCASCQCRFFRSACSCRVLSLNC).

Its subcellular location is the secreted. Involved in the regulation of melanogenesis. The binding of ASP to MC1R precludes alpha-MSH initiated signaling and thus blocks production of cAMP, leading to a down-regulation of eumelanogenesis (brown/black pigment) and thus increasing synthesis of pheomelanin (yellow/red pigment). The polypeptide is Agouti-signaling protein (ASIP) (Macaca silenus (Lion-tailed macaque)).